Reading from the N-terminus, the 431-residue chain is Adenylosuccinate synthetase (431 aa).

Residues 12 to 18 (GDEGKGK) and 40 to 42 (GHT) each bind GTP. Asp13 acts as the Proton acceptor in catalysis. Residues Asp13 and Gly40 each contribute to the Mg(2+) site. Residues 13–16 (DEGK), 38–41 (NAGH), Thr131, Arg145, Gln225, Thr240, and Arg304 contribute to the IMP site. Catalysis depends on His41, which acts as the Proton donor. 300 to 306 (TTTGRKR) serves as a coordination point for substrate. GTP-binding positions include Arg306, 332–334 (KLD), and 414–416 (STS).

This sequence belongs to the adenylosuccinate synthetase family. In terms of assembly, homodimer. Requires Mg(2+) as cofactor.

It localises to the cytoplasm. It carries out the reaction IMP + L-aspartate + GTP = N(6)-(1,2-dicarboxyethyl)-AMP + GDP + phosphate + 2 H(+). The protein operates within purine metabolism; AMP biosynthesis via de novo pathway; AMP from IMP: step 1/2. Functionally, plays an important role in the de novo pathway of purine nucleotide biosynthesis. Catalyzes the first committed step in the biosynthesis of AMP from IMP. The chain is Adenylosuccinate synthetase from Dinoroseobacter shibae (strain DSM 16493 / NCIMB 14021 / DFL 12).